The chain runs to 342 residues: L-threonine 3-dehydrogenase (342 aa).

Position 38 (Cys38) interacts with Zn(2+). Residues Thr40 and His43 each act as charge relay system in the active site. The Zn(2+) site is built by His63, Glu64, Cys93, Cys96, Cys99, and Cys107. NAD(+) is bound by residues Ile175, Asp195, Arg200, 262-264, and 286-287; these read LGI and IY.

The protein belongs to the zinc-containing alcohol dehydrogenase family. As to quaternary structure, homotetramer. Zn(2+) serves as cofactor.

It localises to the cytoplasm. The enzyme catalyses L-threonine + NAD(+) = (2S)-2-amino-3-oxobutanoate + NADH + H(+). It participates in amino-acid degradation; L-threonine degradation via oxydo-reductase pathway; glycine from L-threonine: step 1/2. Catalyzes the NAD(+)-dependent oxidation of L-threonine to 2-amino-3-ketobutyrate. This chain is L-threonine 3-dehydrogenase, found in Burkholderia lata (strain ATCC 17760 / DSM 23089 / LMG 22485 / NCIMB 9086 / R18194 / 383).